A 1096-amino-acid chain; its full sequence is Lysine-specific demethylase PHF2 (1096 aa).

A PHD-type zinc finger spans residues 5-56 (PVYCVCRLPYDVTRFMIECDACKDWFHGSCVGVEEEEAPDIDIYHCPNCEKT). 2 residues coordinate 2-oxoglutarate: threonine 193 and threonine 246. The JmjC domain maps to 197 to 353 (FSDTRMSSFV…MQMRAYEVER (157 aa)). Fe cation-binding residues include histidine 249 and aspartate 251. Residues tyrosine 259 and lysine 266 each coordinate 2-oxoglutarate. Tyrosine 321 is a binding site for Fe cation. Threonine 323 is a 2-oxoglutarate binding site. Positions 448–630 (TVRPEVNAAA…KSPLAGNKDK (183 aa)) are disordered. Serine 474 carries the phosphoserine modification. Phosphothreonine is present on threonine 479. Over residues 503–515 (SKIPKPPKSPKPP) the composition is skewed to pro residues. Serine 536 is subject to Phosphoserine. Basic and acidic residues-rich tracts occupy residues 545–560 (LEAH…EPPK) and 575–630 (DTVH…NKDK). A phosphoserine mark is found at serine 651, serine 677, and serine 701. Lysine 707 is covalently cross-linked (Glycyl lysine isopeptide (Lys-Gly) (interchain with G-Cter in SUMO2)). An N6-acetyllysine modification is found at lysine 716. Disordered regions lie at residues 719–755 (LDSA…ESGS), 811–841 (WGTG…KRLL), and 871–1080 (YPSL…TAKQ). At tyrosine 724 the chain carries Phosphotyrosine. The segment covering 725 to 753 (KSDDSSDEGSLHIDTDTKPGRNAKVKKES) has biased composition (basic and acidic residues). Residues serine 726, serine 729, serine 730, and serine 734 each carry the phosphoserine modification. Phosphoserine occurs at positions 873, 876, and 893. Residues 910–919 (RQDRPVREGT) show a composition bias toward basic and acidic residues. Over residues 943–953 (NRKKKNTKRKP) the composition is skewed to basic residues. Residues 954–1010 (APNTASPSISTSASASTGTTSASTTPASTTPASTTPASTTPASTSTASSQASQEGSS) show a composition bias toward low complexity. Composition is skewed to polar residues over residues 1031-1040 (GTFSGSQAGR) and 1054-1065 (RRPSASSPNNTA). Serine 1057 bears the Phosphoserine; by PKA mark.

Belongs to the JHDM1 histone demethylase family. JHDM1D subfamily. Component of the PHF2-ARID5B complex, at least composed of PHF2 and ARID5B. Interacts with HNF4A and NR1H4. Interacts with RELA. Phosphorylated by PKA on specific serine residues, leading to the formation of an active lysine demethylase complex.

The protein localises to the nucleus. The protein resides in the nucleolus. Its subcellular location is the chromosome. It localises to the centromere. It is found in the kinetochore. The enzyme catalyses N(6),N(6)-dimethyl-L-lysyl(9)-[histone H3] + 2-oxoglutarate + O2 = N(6)-methyl-L-lysyl(9)-[histone H3] + formaldehyde + succinate + CO2. Its activity is regulated as follows. Enzymatically inactive by itself, and become active following phosphorylation by PKA. Functionally, lysine demethylase that demethylates both histones and non-histone proteins. Enzymatically inactive by itself, and becomes active following phosphorylation by PKA: forms a complex with ARID5B and mediates demethylation of methylated ARID5B. Demethylation of ARID5B leads to target the PHF2-ARID5B complex to target promoters, where PHF2 mediates demethylation of dimethylated 'Lys-9' of histone H3 (H3K9me2), followed by transcription activation of target genes. The PHF2-ARID5B complex acts as a coactivator of HNF4A in liver. PHF2 is recruited to trimethylated 'Lys-4' of histone H3 (H3K4me3) at rDNA promoters and promotes expression of rDNA. Involved in the activation of toll-like receptor 4 (TLR4)-target inflammatory genes in macrophages by catalyzing the demethylation of trimethylated histone H4 lysine 20 (H4K20me3) at the gene promoters. The polypeptide is Lysine-specific demethylase PHF2 (Phf2) (Mus musculus (Mouse)).